The chain runs to 122 residues: Small ribosomal subunit protein uS13 (122 aa).

The tract at residues 92–122 (HRMGLPVRGQRTKTNARTRKGPSKPVSGKKK) is disordered. The segment covering 101-122 (QRTKTNARTRKGPSKPVSGKKK) has biased composition (basic residues).

The protein belongs to the universal ribosomal protein uS13 family. As to quaternary structure, part of the 30S ribosomal subunit. Forms a loose heterodimer with protein S19. Forms two bridges to the 50S subunit in the 70S ribosome.

Its function is as follows. Located at the top of the head of the 30S subunit, it contacts several helices of the 16S rRNA. In the 70S ribosome it contacts the 23S rRNA (bridge B1a) and protein L5 of the 50S subunit (bridge B1b), connecting the 2 subunits; these bridges are implicated in subunit movement. Contacts the tRNAs in the A and P-sites. The polypeptide is Small ribosomal subunit protein uS13 (Ruminiclostridium cellulolyticum (strain ATCC 35319 / DSM 5812 / JCM 6584 / H10) (Clostridium cellulolyticum)).